We begin with the raw amino-acid sequence, 477 residues long: MSIPRLKSYLMMFAAVLMLGQVLTAQAEEALPDFTTLVEQASPAVVNISTKQKLPDRRIAAGQMPDLEGLPPMFREFFERNMPQQPRSPRGDRQREAQSLGSGFIISSDGYVLTNNHVVADADEIIVRLSDRSELQAKLVGTDPRTDVALLKVDGKNLPTVKLGDSEKLKVGEWVLAIGSPFGFDHSVTKGIVSAKGRTLPNDTYVPFIQTDVAINPGNSGGPLFNMKGEVVGINSQIFTRSGGFMGLSFAIPIDVAIDVSNQLKKDGKVSRGWLGVVIQEVNKDLAESFGLDKPAGALVAQVLENGPAAKGGLQVGDVILSMNGQPIVMSADLPHLVGGLKDGEKAKLEIIRNGKRQNLDISVGALPDDDVEIGAGTEGGAERSSNRLGVSVADLTAEQKKSLELKGGVVIKEVQDGPAAMIGLRPGDVISHLNNQAIGSAKEFTEIAKELPKNRSVSMRVLRQGRASFITFKLAE.

Residues 1 to 27 form the signal peptide; it reads MSIPRLKSYLMMFAAVLMLGQVLTAQA. Catalysis depends on charge relay system residues H117, D147, and S220. Substrate contacts are provided by residues 218-220 and 275-279; these read GNS and LGVVI. PDZ domains follow at residues 264–355 and 361–466; these read LKKD…IRNG and DISV…LRQG.

It belongs to the peptidase S1C family.

The protein resides in the periplasm. It carries out the reaction Acts on substrates that are at least partially unfolded. The cleavage site P1 residue is normally between a pair of hydrophobic residues, such as Val-|-Val.. Its function is as follows. Might be efficient in the degradation of transiently denatured and unfolded proteins which accumulate in the periplasm following stress conditions. The sequence is that of Probable periplasmic serine endoprotease DegP-like from Pseudomonas putida (strain ATCC 700007 / DSM 6899 / JCM 31910 / BCRC 17059 / LMG 24140 / F1).